The chain runs to 472 residues: Relaxin-3 receptor 1 (472 aa).

Residues 1 to 81 (MQVASATPAA…ESTDTEARVR (81 aa)) lie on the Extracellular side of the membrane. Residues Asn36 and Asn40 are each glycosylated (N-linked (GlcNAc...) asparagine). Residues 82–102 (ILISAVYWVVCALGLAGNLLV) form a helical membrane-spanning segment. Topologically, residues 103–119 (LYLMKSKQGWRKSSINL) are cytoplasmic. The helical transmembrane segment at 120–140 (FVTNLALTDFQFVLTLPFWAV) threads the bilayer. Topologically, residues 141–156 (ENALDFKWPFGKAMCK) are extracellular. An intrachain disulfide couples Cys155 to Cys247. The chain crosses the membrane as a helical span at residues 157 to 177 (IVSMVTSMNMYASVFFLTAMS). At 178–215 (VARYHSVASALKSHRTRGRGRGDCCGQSLRESCCFSAK) the chain is on the cytoplasmic side. Residues 216–236 (VLCGLIWASAALASLPNAIFS) form a helical membrane-spanning segment. Residues 237-270 (TTIRVLGEELCLMHFPDKLLGWDRQFWLGLYHLQ) are Extracellular-facing. A helical membrane pass occupies residues 271–291 (KVLLGFLLPLSIISLCYLLLV). Residues 292 to 298 (RFISDRR) lie on the Cytoplasmic side of the membrane. The helical transmembrane segment at 299–319 (VVGTTDAVGAAAAPGGGLSTA) threads the bilayer. Residues 320–332 (SARRRSKVTKSVT) are Extracellular-facing. Residues 333 to 353 (IVVLSFFLCWLPNQALTTWSI) traverse the membrane as a helical segment. The Cytoplasmic segment spans residues 354-472 (LIKFNAVPFS…YDLLPSSSAY (119 aa)).

Belongs to the G-protein coupled receptor 1 family.

The protein localises to the cell membrane. In terms of biological role, receptor for RNL3/relaxin-3. Binding of the ligand inhibit cAMP accumulation. In Mus musculus (Mouse), this protein is Relaxin-3 receptor 1 (Rxfp3).